The following is a 149-amino-acid chain: Hut operon positive regulatory protein (149 aa).

Belongs to the HutP family. Homohexamer.

Its function is as follows. Antiterminator that binds to cis-acting regulatory sequences on the mRNA in the presence of histidine, thereby suppressing transcription termination and activating the hut operon for histidine utilization. This is Hut operon positive regulatory protein from Geobacillus thermodenitrificans (strain NG80-2).